The following is a 341-amino-acid chain: Holliday junction branch migration complex subunit RuvB (341 aa).

A large ATPase domain (RuvB-L) region spans residues 1–182 (MKDRLISAVA…FGVISRLEYY (182 aa)). Residues Leu-21, Arg-22, Gly-63, Lys-66, Thr-67, Thr-68, 129–131 (EDY), Arg-172, Tyr-182, and Arg-219 each bind ATP. Residue Thr-67 participates in Mg(2+) binding. Residues 183–253 (RPEDLVLIVN…VAVEALKFLE (71 aa)) form a small ATPAse domain (RuvB-S) region. The tract at residues 256–341 (PLGLDFADRR…REETDQVSLW (86 aa)) is head domain (RuvB-H). The DNA site is built by Arg-311 and Arg-316.

Belongs to the RuvB family. As to quaternary structure, homohexamer. Forms an RuvA(8)-RuvB(12)-Holliday junction (HJ) complex. HJ DNA is sandwiched between 2 RuvA tetramers; dsDNA enters through RuvA and exits via RuvB. An RuvB hexamer assembles on each DNA strand where it exits the tetramer. Each RuvB hexamer is contacted by two RuvA subunits (via domain III) on 2 adjacent RuvB subunits; this complex drives branch migration. In the full resolvosome a probable DNA-RuvA(4)-RuvB(12)-RuvC(2) complex forms which resolves the HJ.

It localises to the cytoplasm. It catalyses the reaction ATP + H2O = ADP + phosphate + H(+). The RuvA-RuvB-RuvC complex processes Holliday junction (HJ) DNA during genetic recombination and DNA repair, while the RuvA-RuvB complex plays an important role in the rescue of blocked DNA replication forks via replication fork reversal (RFR). RuvA specifically binds to HJ cruciform DNA, conferring on it an open structure. The RuvB hexamer acts as an ATP-dependent pump, pulling dsDNA into and through the RuvAB complex. RuvB forms 2 homohexamers on either side of HJ DNA bound by 1 or 2 RuvA tetramers; 4 subunits per hexamer contact DNA at a time. Coordinated motions by a converter formed by DNA-disengaged RuvB subunits stimulates ATP hydrolysis and nucleotide exchange. Immobilization of the converter enables RuvB to convert the ATP-contained energy into a lever motion, pulling 2 nucleotides of DNA out of the RuvA tetramer per ATP hydrolyzed, thus driving DNA branch migration. The RuvB motors rotate together with the DNA substrate, which together with the progressing nucleotide cycle form the mechanistic basis for DNA recombination by continuous HJ branch migration. Branch migration allows RuvC to scan DNA until it finds its consensus sequence, where it cleaves and resolves cruciform DNA. In Pelotomaculum thermopropionicum (strain DSM 13744 / JCM 10971 / SI), this protein is Holliday junction branch migration complex subunit RuvB.